The chain runs to 551 residues: Glucans biosynthesis protein D (551 aa).

Positions 1–32 (MNRRRFIKGSMAMAAVCGSSGIASLFSQAAFA) form a signal peptide, tat-type signal.

It belongs to the OpgD/OpgG family. In terms of processing, predicted to be exported by the Tat system. The position of the signal peptide cleavage has not been experimentally proven.

It is found in the periplasm. Its pathway is glycan metabolism; osmoregulated periplasmic glucan (OPG) biosynthesis. Functionally, probably involved in the control of the structural glucose backbone of osmoregulated periplasmic glucans (OPGs). The polypeptide is Glucans biosynthesis protein D (mdoD) (Salmonella typhimurium (strain LT2 / SGSC1412 / ATCC 700720)).